The primary structure comprises 296 residues: Bifunctional protein FolD (296 aa).

Residues 170-172 (GRS) and Ser195 each bind NADP(+).

The protein belongs to the tetrahydrofolate dehydrogenase/cyclohydrolase family. Homodimer.

The catalysed reaction is (6R)-5,10-methylene-5,6,7,8-tetrahydrofolate + NADP(+) = (6R)-5,10-methenyltetrahydrofolate + NADPH. It carries out the reaction (6R)-5,10-methenyltetrahydrofolate + H2O = (6R)-10-formyltetrahydrofolate + H(+). It functions in the pathway one-carbon metabolism; tetrahydrofolate interconversion. Functionally, catalyzes the oxidation of 5,10-methylenetetrahydrofolate to 5,10-methenyltetrahydrofolate and then the hydrolysis of 5,10-methenyltetrahydrofolate to 10-formyltetrahydrofolate. This Rhodospirillum rubrum (strain ATCC 11170 / ATH 1.1.1 / DSM 467 / LMG 4362 / NCIMB 8255 / S1) protein is Bifunctional protein FolD.